The sequence spans 370 residues: UDP-N-acetylglucosamine--N-acetylmuramyl-(pentapeptide) pyrophosphoryl-undecaprenol N-acetylglucosamine transferase (370 aa).

Residues 10–12 (TGG), asparagine 126, serine 200, isoleucine 255, and glutamine 300 each bind UDP-N-acetyl-alpha-D-glucosamine.

It belongs to the glycosyltransferase 28 family. MurG subfamily.

The protein localises to the cell membrane. It catalyses the reaction Mur2Ac(oyl-L-Ala-gamma-D-Glu-L-Lys-D-Ala-D-Ala)-di-trans,octa-cis-undecaprenyl diphosphate + UDP-N-acetyl-alpha-D-glucosamine = beta-D-GlcNAc-(1-&gt;4)-Mur2Ac(oyl-L-Ala-gamma-D-Glu-L-Lys-D-Ala-D-Ala)-di-trans,octa-cis-undecaprenyl diphosphate + UDP + H(+). It participates in cell wall biogenesis; peptidoglycan biosynthesis. Its function is as follows. Cell wall formation. Catalyzes the transfer of a GlcNAc subunit on undecaprenyl-pyrophosphoryl-MurNAc-pentapeptide (lipid intermediate I) to form undecaprenyl-pyrophosphoryl-MurNAc-(pentapeptide)GlcNAc (lipid intermediate II). In Lactobacillus delbrueckii subsp. bulgaricus (strain ATCC 11842 / DSM 20081 / BCRC 10696 / JCM 1002 / NBRC 13953 / NCIMB 11778 / NCTC 12712 / WDCM 00102 / Lb 14), this protein is UDP-N-acetylglucosamine--N-acetylmuramyl-(pentapeptide) pyrophosphoryl-undecaprenol N-acetylglucosamine transferase.